Here is a 108-residue protein sequence, read N- to C-terminus: Nucleoid-associated protein BamMC406_1737 (108 aa).

The segment covering 85-95 (ATSQEKMSGMT) has biased composition (polar residues). The tract at residues 85–108 (ATSQEKMSGMTSGLPLPPGFKLPF) is disordered. Over residues 99–108 (PLPPGFKLPF) the composition is skewed to pro residues.

The protein belongs to the YbaB/EbfC family. As to quaternary structure, homodimer.

It localises to the cytoplasm. Its subcellular location is the nucleoid. Its function is as follows. Binds to DNA and alters its conformation. May be involved in regulation of gene expression, nucleoid organization and DNA protection. The chain is Nucleoid-associated protein BamMC406_1737 from Burkholderia ambifaria (strain MC40-6).